Reading from the N-terminus, the 375-residue chain is Aminomethyltransferase (375 aa).

Belongs to the GcvT family. In terms of assembly, the glycine cleavage system is composed of four proteins: P, T, L and H.

It carries out the reaction N(6)-[(R)-S(8)-aminomethyldihydrolipoyl]-L-lysyl-[protein] + (6S)-5,6,7,8-tetrahydrofolate = N(6)-[(R)-dihydrolipoyl]-L-lysyl-[protein] + (6R)-5,10-methylene-5,6,7,8-tetrahydrofolate + NH4(+). The glycine cleavage system catalyzes the degradation of glycine. The polypeptide is Aminomethyltransferase (Cupriavidus metallidurans (strain ATCC 43123 / DSM 2839 / NBRC 102507 / CH34) (Ralstonia metallidurans)).